The primary structure comprises 538 residues: MTNQQHDHDFDHDRRSFASRTPVNNNPDKVVYRRGFVTRHQVTGWRFVMRRIAAGIALHDTRMLVDPLRTQSRAVLMGVLIVITGLIGSFVFSLIRPNGQAGSNAVLADRSTAALYVRVGEQLHPVLNLTSARLIVGRPVSPTTVKSTELDQFPRGNLIGIPGAPERMVQNTSTDANWTVCDGLNAPSRGGADGVGVTVIAGPLEDTGARAAALGPGQAVLVDSGAGTWLLWDGKRSPIDLADHAVTSGLGLGADVPAPRIIASGLFNAIPEAPPLTAPIIPDAGNPASFGVPAPIGAVVSSYALKDSGKTISDTVQYYAVLPDGLQQISPVLAAILRNNNSYGLQQPPRLGADEVAKLPVSRVLDTRRYPSEPVSLVDVTRDPVTCAYWSKPVGAATSSLTLLAGSALPVPDAVHTVELVGAGNGGVATRVALAAGTGYFTQTVGGGPDAPGAGSLFWVSDTGVRYGIDNEPQGVAGGGKAVEALGLNPPPVPIPWSVLSLFVPGPTLSRADALLAHDTLVPDSRPARPVSAEGGYR.

The segment covering 1 to 16 (MTNQQHDHDFDHDRRS) has biased composition (basic and acidic residues). The disordered stretch occupies residues 1 to 25 (MTNQQHDHDFDHDRRSFASRTPVNN). A helical membrane pass occupies residues 75–95 (VLMGVLIVITGLIGSFVFSLI).

It belongs to the EccB family. In terms of assembly, part of the ESX-3 / type VII secretion system (T7SS), which is composed of cytosolic and membrane components. The ESX-3 membrane complex is composed of EccB3, EccC3, EccD3 and EccE3.

It localises to the cell inner membrane. In terms of biological role, an ATPase. Part of the ESX-3 specialized secretion system, which is important for iron and zinc uptake or homeostasis. This Mycobacterium tuberculosis (strain CDC 1551 / Oshkosh) protein is ESX-3 secretion system ATPase EccB3.